The primary structure comprises 335 residues: Nucleoid-associated protein YejK (335 aa).

The protein belongs to the YejK family.

The protein resides in the cytoplasm. It localises to the nucleoid. This is Nucleoid-associated protein YejK from Escherichia coli (strain K12 / MC4100 / BW2952).